A 494-amino-acid polypeptide reads, in one-letter code: NADPH:adrenodoxin oxidoreductase, mitochondrial (494 aa).

The N-terminal 34 residues, 1–34 (MAPRCWHWWRWSAWSGLRPSPSRSTPTPGFCQKF), are a transit peptide targeting the mitochondrion. FAD contacts are provided by Ala51, Glu72, Leu80, and Val116. NADP(+) contacts are provided by residues 187 to 190 (QGNV), 231 to 232 (RR), and Glu243. Residue Ser313 is modified to Phosphoserine. Residues Trp401 and 408–410 (GVI) each bind FAD. Gly408 is an NADP(+) binding site.

This sequence belongs to the ferredoxin--NADP reductase type 1 family. Monomer. Interacts directly with FDX1. Requires FAD as cofactor. In terms of tissue distribution, expressed in the adrenal, testis and ovary and to a lesser extent in the liver and kidney.

The protein localises to the mitochondrion inner membrane. The catalysed reaction is 2 reduced [adrenodoxin] + NADP(+) + H(+) = 2 oxidized [adrenodoxin] + NADPH. It carries out the reaction 2 reduced [2Fe-2S]-[ferredoxin] + NADP(+) + H(+) = 2 oxidized [2Fe-2S]-[ferredoxin] + NADPH. The protein operates within steroid metabolism; cholesterol metabolism. Its function is as follows. Serves as the first electron transfer protein in all the mitochondrial P450 systems including cholesterol side chain cleavage in all steroidogenic tissues, steroid 11-beta hydroxylation in the adrenal cortex, 25-OH-vitamin D3-24 hydroxylation in the kidney, and sterol C-27 hydroxylation in the liver. Also acts as a ferredoxin--NADP(+) reductase essential for coenzyme Q biosynthesis: together with FDX2, transfers the electrons required for the hydroxylation reaction performed by COQ6. The chain is NADPH:adrenodoxin oxidoreductase, mitochondrial (Fdxr) from Mus musculus (Mouse).